We begin with the raw amino-acid sequence, 822 residues long: DNA gyrase subunit A (822 aa).

The 466-residue stretch at 32-497 folds into the Topo IIA-type catalytic domain; it reads LPDVRDGLKP…QVLSLEDEDL (466 aa). The active-site O-(5'-phospho-DNA)-tyrosine intermediate is the Y120. The GyrA-box signature appears at 524 to 530; sequence QKRGGRG.

Belongs to the type II topoisomerase GyrA/ParC subunit family. Heterotetramer, composed of two GyrA and two GyrB chains. In the heterotetramer, GyrA contains the active site tyrosine that forms a transient covalent intermediate with DNA, while GyrB binds cofactors and catalyzes ATP hydrolysis.

It is found in the cytoplasm. It carries out the reaction ATP-dependent breakage, passage and rejoining of double-stranded DNA.. In terms of biological role, a type II topoisomerase that negatively supercoils closed circular double-stranded (ds) DNA in an ATP-dependent manner to modulate DNA topology and maintain chromosomes in an underwound state. Negative supercoiling favors strand separation, and DNA replication, transcription, recombination and repair, all of which involve strand separation. Also able to catalyze the interconversion of other topological isomers of dsDNA rings, including catenanes and knotted rings. Type II topoisomerases break and join 2 DNA strands simultaneously in an ATP-dependent manner. In Streptococcus pneumoniae (strain ATCC BAA-255 / R6), this protein is DNA gyrase subunit A.